The primary structure comprises 436 residues: MGQVLPLVTRQGDRIAIVSGLRTPFARQATAFHGIPAVDLGKMVVSELLARSEIPPAAIEQLVFGQVVQMPEAPNIAREIVLGTGMSVHTDAYSVSRACATSFQAVANVAESLMAGTIRAGIAGGADSSSVLPIGVSKKLARVLVDVNKARTLGQRLKLFSRLRLHDLLPVPPAVAEYSTGLRMGDTAEQMAKTYGITREQQDALAHRSHQRAAQAWSEGKLTNEVMTAYVPPYKAPLSEDNNIRGNSTLADYARLRPAFDRKHGTVTAANSTPLTDGAAAVIMMTESRAKELGLTPLGYLRSYAFTAIDVWQDMLLGPAWSTPLALDRAGLTLADLTLIDMHEAFAAQTLANVQLLGSERFARDVLGRAHATGEVDDSKFNVLGGSIAYGHPFAATGARMITQTLHELRRRGGGFGLVTACAAGGLGAAMVLEAE.

Cys-99 (acyl-thioester intermediate) is an active-site residue. Residues His-392 and Cys-422 each act as proton acceptor in the active site.

It belongs to the thiolase-like superfamily. Thiolase family. In terms of assembly, heterotetramer of two alpha chains (FadJ) and two beta chains (FadI).

It localises to the cytoplasm. The enzyme catalyses an acyl-CoA + acetyl-CoA = a 3-oxoacyl-CoA + CoA. It functions in the pathway lipid metabolism; fatty acid beta-oxidation. Catalyzes the final step of fatty acid oxidation in which acetyl-CoA is released and the CoA ester of a fatty acid two carbons shorter is formed. The sequence is that of 3-ketoacyl-CoA thiolase from Escherichia fergusonii (strain ATCC 35469 / DSM 13698 / CCUG 18766 / IAM 14443 / JCM 21226 / LMG 7866 / NBRC 102419 / NCTC 12128 / CDC 0568-73).